Here is a 517-residue protein sequence, read N- to C-terminus: Crotonobetaine/carnitine--CoA ligase (517 aa).

The protein belongs to the ATP-dependent AMP-binding enzyme family.

It carries out the reaction 4-(trimethylamino)butanoate + ATP + CoA = 4-(trimethylamino)butanoyl-CoA + AMP + diphosphate. It catalyses the reaction crotonobetaine + ATP + CoA = crotonobetainyl-CoA + AMP + diphosphate. The catalysed reaction is (R)-carnitine + ATP + CoA = (R)-carnitinyl-CoA + AMP + diphosphate. Its pathway is amine and polyamine metabolism; carnitine metabolism. Catalyzes the transfer of CoA to carnitine, generating the initial carnitinyl-CoA needed for the CaiB reaction cycle. Also has activity toward crotonobetaine and gamma-butyrobetaine. The chain is Crotonobetaine/carnitine--CoA ligase from Escherichia coli O127:H6 (strain E2348/69 / EPEC).